Reading from the N-terminus, the 116-residue chain is MKVLVIFAVLSLVIFSNCSAETDEDFFGEESFEADDIIPFIAKEQVRKDKENCIGKHHECTDDRDNCCKGKLFRYQCQCFKVIDGKKETKRCACVTPLHYKMAEMAVSVFKKMFKN.

The N-terminal stretch at 1 to 20 (MKVLVIFAVLSLVIFSNCSA) is a signal peptide. The propeptide occupies 21 to 47 (ETDEDFFGEESFEADDIIPFIAKEQVR). 4 disulfides stabilise this stretch: Cys53/Cys68, Cys60/Cys77, Cys67/Cys94, and Cys79/Cys92.

As to expression, expressed by the venom gland.

The protein localises to the secreted. Its subcellular location is the target cell membrane. In terms of biological role, spider venom toxin that shows calcium channel blocking activity and exhibits cytolytic activity by affecting the outer leaflet curvature and/or pore formation across the membrane. It blocks L-type calcium channels (Cav1/CACNA1) in mammalian neurons at nanomolar concentrations. Furthermore, it produces a slow voltage-independent block of mid/low and high voltage-activated calcium channels in cockroach neurons. Potassium ions, histamine, M-ctenitoxin-Cs1a (AC P83619), CSTX-9 (AC P58604), and CSTX-13 (AC P83919) synergistically increase the insecticidal activity of this toxin. In vivo, it causes paralysis in blow flies and provokes death in drosophila. In Cupiennius salei (American wandering spider), this protein is Toxin CSTX-10.